The sequence spans 297 residues: MKKLDPIIEQFLDTLWLEQSLSHNTLLSYRLDLELFSAWLVEPRAFLTLTHTDLQLFLGDRLDKGYKSSSSARIISCLRKFFRFLCLEKYRLDDPTSMLISPRKRVQLPKSLSEEQVMDLLDAPNPLDPIELRDKAMLELLYATGLRVTELISLTIDNLNLRQGVVRVIGKGDKERLVPIGEEASYWIQEFFDYGRMILLSDQQSDVLFPSRRAKQMTRQTFWHRIKYYAILAGIDAEKLSPHVLRHAFATHLINHGADLRVVQMLLGHSDLSTTQIYTHVAKTRLKSIHKQFHPRG.

One can recognise a Core-binding (CB) domain in the interval 2 to 86; sequence KKLDPIIEQF…CLRKFFRFLC (85 aa). The region spanning 107–291 is the Tyr recombinase domain; sequence QLPKSLSEEQ…AKTRLKSIHK (185 aa). Active-site residues include R147, K171, H243, R246, and H269. Residue Y278 is the O-(3'-phospho-DNA)-tyrosine intermediate of the active site.

Belongs to the 'phage' integrase family. XerD subfamily. Forms a cyclic heterotetrameric complex composed of two molecules of XerC and two molecules of XerD.

It is found in the cytoplasm. In terms of biological role, site-specific tyrosine recombinase, which acts by catalyzing the cutting and rejoining of the recombining DNA molecules. The XerC-XerD complex is essential to convert dimers of the bacterial chromosome into monomers to permit their segregation at cell division. It also contributes to the segregational stability of plasmids. The polypeptide is Tyrosine recombinase XerD (Haemophilus ducreyi (strain 35000HP / ATCC 700724)).